Consider the following 238-residue polypeptide: Orotidine 5'-phosphate decarboxylase (238 aa).

Substrate-binding positions include Asp11, Lys32, Asp59 to Thr68, Thr123, Arg185, Gln194, Gly214, and Arg215. Residue Lys61 is the Proton donor of the active site.

It belongs to the OMP decarboxylase family. Type 1 subfamily. As to quaternary structure, homodimer.

The enzyme catalyses orotidine 5'-phosphate + H(+) = UMP + CO2. Its pathway is pyrimidine metabolism; UMP biosynthesis via de novo pathway; UMP from orotate: step 2/2. In terms of biological role, catalyzes the decarboxylation of orotidine 5'-monophosphate (OMP) to uridine 5'-monophosphate (UMP). The chain is Orotidine 5'-phosphate decarboxylase from Nostoc sp. (strain PCC 7120 / SAG 25.82 / UTEX 2576).